Here is a 515-residue protein sequence, read N- to C-terminus: 2,3-bisphosphoglycerate-independent phosphoglycerate mutase (515 aa).

Positions 14 and 64 each coordinate Mn(2+). Residue S64 is the Phosphoserine intermediate of the active site. Substrate contacts are provided by residues H125, 155–156 (RD), R187, R193, 263–266 (RADR), and K337. Mn(2+)-binding residues include D404, H408, D445, H446, and H464.

It belongs to the BPG-independent phosphoglycerate mutase family. Monomer. The cofactor is Mn(2+).

The catalysed reaction is (2R)-2-phosphoglycerate = (2R)-3-phosphoglycerate. Its pathway is carbohydrate degradation; glycolysis; pyruvate from D-glyceraldehyde 3-phosphate: step 3/5. Its function is as follows. Catalyzes the interconversion of 2-phosphoglycerate and 3-phosphoglycerate. The sequence is that of 2,3-bisphosphoglycerate-independent phosphoglycerate mutase from Yersinia pseudotuberculosis serotype I (strain IP32953).